The primary structure comprises 273 residues: MMAARMMAAGLAATALSAHAFRIPTPGEQDARIQTVPYHPEEVVLVRAWNGYVTRIVFDEQEKIIDVAAGFADGWQFSPEGNVLYIKAKSFPAQGSPAQAPEPGLWNTNLLVKTDRRLYDFDLVLASADAATPQALQRSRMAYRLQFRYPAAPQAASRASPVGPAVPAGALNRRYAMQVGNGSDGIAPIAAYDDGRHTWLTFRPGQPFPAVFAVAPDGTETLVNLHIDNQSLVIHRVAPVLMLRSGASVIRIVNQNGDASESPAFECHAEPAL.

Positions 1–20 (MMAARMMAAGLAATALSAHA) are cleaved as a signal peptide.

The protein belongs to the TrbG/VirB9 family. As to quaternary structure, forms a complex with PtlI.

The protein resides in the cell outer membrane. Component of the type IV secretion system ptl required for secretion of assembled pertussis toxin (PTX) through the outer membrane. The chain is Type IV secretion system protein PtlF (ptlF) from Bordetella pertussis (strain Tohama I / ATCC BAA-589 / NCTC 13251).